A 367-amino-acid polypeptide reads, in one-letter code: Aminomethyltransferase (367 aa).

Belongs to the GcvT family. The glycine cleavage system is composed of four proteins: P, T, L and H.

It carries out the reaction N(6)-[(R)-S(8)-aminomethyldihydrolipoyl]-L-lysyl-[protein] + (6S)-5,6,7,8-tetrahydrofolate = N(6)-[(R)-dihydrolipoyl]-L-lysyl-[protein] + (6R)-5,10-methylene-5,6,7,8-tetrahydrofolate + NH4(+). The glycine cleavage system catalyzes the degradation of glycine. The protein is Aminomethyltransferase of Shouchella clausii (strain KSM-K16) (Alkalihalobacillus clausii).